The primary structure comprises 378 residues: D-alanine--D-alanine ligase (378 aa).

Residues Lys-149–Glu-374 form the ATP-grasp domain. Position 189–247 (Glu-189–Glu-247) interacts with ATP. Asp-328, Glu-341, and Asn-343 together coordinate Mg(2+).

Belongs to the D-alanine--D-alanine ligase family. The cofactor is Mg(2+). Requires Mn(2+) as cofactor.

The protein localises to the cytoplasm. The catalysed reaction is 2 D-alanine + ATP = D-alanyl-D-alanine + ADP + phosphate + H(+). It participates in cell wall biogenesis; peptidoglycan biosynthesis. Cell wall formation. This is D-alanine--D-alanine ligase from Bifidobacterium animalis subsp. lactis (strain AD011).